We begin with the raw amino-acid sequence, 322 residues long: MQAGSWVVGGGDSDSRVLSIQSHVVRGYVGNRAATFPLQVLGFEVDAVNSVQFSNHTGYAHWKGQVLNSDELHALYEGLKLNNVNQYDYVLTGYTRDKSFLAMVVDIVRELKQQNPRLVYVCDPVMGDKWDGEGSMYVPEDLLPVYREKVVPVADIITPNQFEAELLTGRRIHSEEEALAVMDMLHAMGPDTVVITSSDLPSPRGKDYLIALGSQRTRSPDGSVATQRIRMEICKVDAVFVGTGDLFAAMLLAWTHKHPNNLKVACEKTVSAMHHVLRRTIQCAKAKAGEGLKPSPAQLELRMVQSKRDIEDPEVVVQATVL.

At Met-1 the chain carries N-acetylmethionine. Pyridoxal is bound by residues Ser-22 and Thr-57. Residue Thr-57 coordinates pyridoxal 5'-phosphate. Phosphoserine is present on Ser-69. ATP is bound at residue Asp-123. Position 123 (Asp-123) interacts with Na(+). A Mg(2+)-binding site is contributed by Asp-128. Thr-158 provides a ligand contact to Na(+). Position 160–163 (Asn-160–Glu-163) interacts with ATP. A Phosphoserine modification is found at Ser-174. Residue Thr-196 participates in Na(+) binding. Thr-196–Ser-197 contributes to the ATP binding site. Ser-223 is modified (phosphoserine). ATP contacts are provided by residues Val-236–Ala-238 and Thr-243. Gly-244–Asp-245 provides a ligand contact to pyridoxal 5'-phosphate. The active-site Proton acceptor is Asp-245. Ser-295 is modified (phosphoserine).

Belongs to the pyridoxine kinase family. Homodimer. Requires Zn(2+) as cofactor. Mg(2+) is required as a cofactor. Post-translationally, the N-terminus is blocked.

It localises to the cytoplasm. The protein localises to the cytosol. The enzyme catalyses pyridoxal + ATP = pyridoxal 5'-phosphate + ADP + H(+). The catalysed reaction is pyridoxamine + ATP = pyridoxamine 5'-phosphate + ADP + H(+). It carries out the reaction pyridoxine + ATP = pyridoxine 5'-phosphate + ADP + H(+). The protein operates within cofactor metabolism; pyridoxal 5'-phosphate salvage; pyridoxal 5'-phosphate from pyridoxal: step 1/1. It functions in the pathway cofactor metabolism; pyridoxal 5'-phosphate salvage; pyridoxine 5'-phosphate from pyridoxine: step 1/1. It participates in cofactor metabolism; pyridoxal 5'-phosphate salvage; pyridoxamine 5'-phosphate from pyridoxamine: step 1/1. Activity is increased in the presence of K(+)or Na(+). Its function is as follows. Catalyzes the phosphorylation of the dietary vitamin B6 vitamers pyridoxal (PL), pyridoxine (PN) and pyridoxamine (PM) to form pyridoxal 5'-phosphate (PLP), pyridoxine 5'-phosphate (PNP) and pyridoxamine 5'-phosphate (PMP), respectively. PLP is the active form of vitamin B6, and acts as a cofactor for over 140 different enzymatic reactions. In Sus scrofa (Pig), this protein is Pyridoxal kinase (PDXK).